The following is a 248-amino-acid chain: 23S rRNA (guanosine(2553)-2'-O)-methyltransferase RlmP (248 aa).

Residues R123, G204, V224, and L233 each contribute to the S-adenosyl-L-methionine site.

The protein belongs to the class IV-like SAM-binding methyltransferase superfamily. RNA methyltransferase TrmH family. In terms of assembly, homodimer.

Its subcellular location is the cytoplasm. The enzyme catalyses guanosine(2553) in 23S rRNA + S-adenosyl-L-methionine = 2'-O-methylguanosine(2553) in 23S rRNA + S-adenosyl-L-homocysteine + H(+). Functionally, specifically methylates the ribose of guanosine 2553 (G2553) in 23S rRNA. When the target G2553 is mutated, is able to methylate the ribose of adenosine, but it cannot methylate cytidine nor uridine. Modifies free 23S rRNA but not the fully assembled ribosome nor the 50S subunit, suggesting that the modification occurs early during ribosome biogenesis. The polypeptide is 23S rRNA (guanosine(2553)-2'-O)-methyltransferase RlmP (Bacillus subtilis (strain 168)).